We begin with the raw amino-acid sequence, 282 residues long: Cell division protein FtsQ (282 aa).

The Cytoplasmic portion of the chain corresponds to 1–30; it reads MINIGPPKKRRLRRKGNRFKKTRRVIPWRR. The helical transmembrane segment at 31-51 threads the bilayer; that stretch reads LMIGALWGTMALASLGMVVAV. Topologically, residues 52-282 are periplasmic; the sequence is ACFAGQMLFA…LDAGELRGKG (231 aa). The POTRA domain maps to 65 to 133; the sequence is FKVERIQVEN…DQLVIRVDER (69 aa).

This sequence belongs to the FtsQ/DivIB family. FtsQ subfamily.

It is found in the cell inner membrane. In terms of biological role, essential cell division protein. The sequence is that of Cell division protein FtsQ from Syntrophotalea carbinolica (strain DSM 2380 / NBRC 103641 / GraBd1) (Pelobacter carbinolicus).